The following is a 293-amino-acid chain: Aspartate carbamoyltransferase catalytic subunit (293 aa).

2 residues coordinate carbamoyl phosphate: arginine 50 and threonine 51. Lysine 78 contacts L-aspartate. Carbamoyl phosphate contacts are provided by arginine 100, histidine 127, and glutamine 130. Positions 160 and 210 each coordinate L-aspartate. The carbamoyl phosphate site is built by alanine 253 and proline 254.

It belongs to the aspartate/ornithine carbamoyltransferase superfamily. ATCase family. As to quaternary structure, heterododecamer (2C3:3R2) of six catalytic PyrB chains organized as two trimers (C3), and six regulatory PyrI chains organized as three dimers (R2).

It carries out the reaction carbamoyl phosphate + L-aspartate = N-carbamoyl-L-aspartate + phosphate + H(+). The protein operates within pyrimidine metabolism; UMP biosynthesis via de novo pathway; (S)-dihydroorotate from bicarbonate: step 2/3. Functionally, catalyzes the condensation of carbamoyl phosphate and aspartate to form carbamoyl aspartate and inorganic phosphate, the committed step in the de novo pyrimidine nucleotide biosynthesis pathway. This chain is Aspartate carbamoyltransferase catalytic subunit, found in Staphylococcus aureus (strain USA300).